Consider the following 259-residue polypeptide: uncharacterized protein (259 aa).

Belongs to the ParA family.

This is an uncharacterized protein from Methanocaldococcus jannaschii (strain ATCC 43067 / DSM 2661 / JAL-1 / JCM 10045 / NBRC 100440) (Methanococcus jannaschii).